A 215-amino-acid polypeptide reads, in one-letter code: Cytidylate kinase (215 aa).

10-18 serves as a coordination point for ATP; sequence GPAASGKGT.

The protein belongs to the cytidylate kinase family. Type 1 subfamily.

The protein resides in the cytoplasm. The enzyme catalyses CMP + ATP = CDP + ADP. It carries out the reaction dCMP + ATP = dCDP + ADP. The polypeptide is Cytidylate kinase (Bartonella bacilliformis (strain ATCC 35685 / KC583 / Herrer 020/F12,63)).